Reading from the N-terminus, the 90-residue chain is Small ribosomal subunit protein bS16 (90 aa).

The protein belongs to the bacterial ribosomal protein bS16 family.

The protein is Small ribosomal subunit protein bS16 of Clostridioides difficile (strain 630) (Peptoclostridium difficile).